Consider the following 261-residue polypeptide: Adenosylcobinamide-GDP ribazoletransferase (261 aa).

5 helical membrane-spanning segments follow: residues 12 to 32 (NLFF…WVVI), 46 to 66 (LVGL…QLIL), 67 to 87 (PASI…GAFH), 120 to 140 (GALS…ELAL), and 199 to 219 (IFVL…TLWL).

The protein belongs to the CobS family. Mg(2+) serves as cofactor.

It localises to the cell inner membrane. It carries out the reaction alpha-ribazole + adenosylcob(III)inamide-GDP = adenosylcob(III)alamin + GMP + H(+). It catalyses the reaction alpha-ribazole 5'-phosphate + adenosylcob(III)inamide-GDP = adenosylcob(III)alamin 5'-phosphate + GMP + H(+). The protein operates within cofactor biosynthesis; adenosylcobalamin biosynthesis; adenosylcobalamin from cob(II)yrinate a,c-diamide: step 7/7. Its function is as follows. Joins adenosylcobinamide-GDP and alpha-ribazole to generate adenosylcobalamin (Ado-cobalamin). Also synthesizes adenosylcobalamin 5'-phosphate from adenosylcobinamide-GDP and alpha-ribazole 5'-phosphate. This chain is Adenosylcobinamide-GDP ribazoletransferase, found in Shewanella frigidimarina (strain NCIMB 400).